Here is a 342-residue protein sequence, read N- to C-terminus: Nucleoid-associated protein Shewmr4_2217 (342 aa).

The protein belongs to the YejK family.

It is found in the cytoplasm. The protein resides in the nucleoid. The polypeptide is Nucleoid-associated protein Shewmr4_2217 (Shewanella sp. (strain MR-4)).